Reading from the N-terminus, the 715-residue chain is DNA ligase (715 aa).

Residues 47–51, 96–97, and Glu128 contribute to the NAD(+) site; these read DADYD and SL. The N6-AMP-lysine intermediate role is filled by Lys130. The NAD(+) site is built by Arg151, Glu188, Lys306, and Lys330. Positions 435, 438, 453, and 459 each coordinate Zn(2+). Residues 637 to 715 form the BRCT domain; it reads RRDTAVAGKT…EDEWLALIGN (79 aa).

It belongs to the NAD-dependent DNA ligase family. LigA subfamily. Mg(2+) is required as a cofactor. Mn(2+) serves as cofactor.

The catalysed reaction is NAD(+) + (deoxyribonucleotide)n-3'-hydroxyl + 5'-phospho-(deoxyribonucleotide)m = (deoxyribonucleotide)n+m + AMP + beta-nicotinamide D-nucleotide.. DNA ligase that catalyzes the formation of phosphodiester linkages between 5'-phosphoryl and 3'-hydroxyl groups in double-stranded DNA using NAD as a coenzyme and as the energy source for the reaction. It is essential for DNA replication and repair of damaged DNA. The sequence is that of DNA ligase from Rhodopseudomonas palustris (strain ATCC BAA-98 / CGA009).